A 1757-amino-acid chain; its full sequence is Serine/threonine-protein kinase WNK3 (1757 aa).

The disordered stretch occupies residues 1 to 25 (MATDSGEPASTEDSEKPDGVSFENR). S62 carries the post-translational modification Phosphoserine. The span at 66–82 (TEDDKVAESSRRDERKA) shows a compositional bias: basic and acidic residues. Residues 66 to 85 (TEDDKVAESSRRDERKAATN) are disordered. The region spanning 146-404 (LKFDIELGRG…IKDLLNHAFF (259 aa)) is the Protein kinase domain. Residues 226–229 (TELM) and K276 contribute to the ATP site. Residue D293 is the Proton acceptor of the active site. Phosphoserine; by autocatalysis is present on residues S303 and S307. The segment at 536–546 (EYEETEVDQHV) is interaction with KLHL3. T540 is modified (phosphothreonine). Composition is skewed to polar residues over residues 551-570 (LQGK…SSEP), 578-604 (SDTS…KLTQ), and 674-689 (SVKE…SGNG). Disordered stretches follow at residues 551-604 (LQGK…KLTQ) and 674-705 (SVKE…PRPE). Residue S1039 is modified to Phosphoserine. Polar residues predominate over residues 1404–1422 (VATEKNVTSTTEVSVQSGS). 3 disordered regions span residues 1404-1440 (VATE…QTCT), 1479-1498 (SLFY…EIED), and 1536-1574 (ATKD…MTHS). A compositionally biased stretch (low complexity) spans 1479 to 1491 (SLFYSPSSPMSSD). Phosphoserine is present on residues S1550 and S1553. A compositionally biased stretch (basic residues) spans 1555 to 1566 (RRPRSFKSKLRS). At S1595 the chain carries Phosphoserine. 2 disordered regions span residues 1621–1650 (HFPS…CEST) and 1734–1757 (PGMN…PGPK). Residues 1624-1637 (SKPSLNQLKQSQQK) are compositionally biased toward low complexity. Polar residues predominate over residues 1641–1650 (ENWNKSCEST). Residues 1742 to 1757 (PAPPVQNPASIPPGPK) show a composition bias toward pro residues.

The protein belongs to the protein kinase superfamily. Ser/Thr protein kinase family. WNK subfamily. Interacts with WNK1 and WNK4. Requires Mg(2+) as cofactor. Post-translationally, autophosphorylated at Ser-303 and Ser-307, promoting its activity. Phosphorylation at Thr-540 prevents interaction with KLHL3 and subsequent ubiquitination and degradation by the BCR(KLHL3) complex. Ubiquitinated by the BCR(KLHL2) complex, leading to its degradation. Ubiquitinated by the BCR(KLHL3) complex, leading to its degradation. Expressed in pancreatic duct.

It localises to the cytoplasm. The catalysed reaction is L-seryl-[protein] + ATP = O-phospho-L-seryl-[protein] + ADP + H(+). The enzyme catalyses L-threonyl-[protein] + ATP = O-phospho-L-threonyl-[protein] + ADP + H(+). Activated in response to hyperosmotic stress: cell shrinkage promotes formation of a membraneless compartment that concentrates WNK3 with its substrates, OXSR1/OSR1 and STK39/SPAK. Activation requires autophosphorylation of Ser-307 and, to a lower extent, Ser-303. Autophosphorylation and subsequent activation is inhibited by increases in intracellular ionic strength: Cl(-) potently inhibits WNK3 kinase activity via direct binding. Also inhibited by K(+) ions. Kinase activity is inhibited by WNK4. Its function is as follows. Serine/threonine-protein kinase component of the WNK3-SPAK/OSR1 kinase cascade, which plays an important role in the regulation of electrolyte homeostasis and regulatory volume increase in response to hyperosmotic stress. WNK3 mediates regulatory volume increase in response to hyperosmotic stress by acting as a molecular crowding sensor, which senses cell shrinkage and mediates formation of a membraneless compartment by undergoing liquid-liquid phase separation. The membraneless compartment concentrates WNK3 with its substrates, OXSR1/OSR1 and STK39/SPAK, promoting WNK3-dependent phosphorylation and activation of downstream kinases OXSR1/OSR1 and STK39/SPAK. Following activation, OXSR1/OSR1 and STK39/SPAK catalyze phosphorylation of ion cotransporters SLC12A1/NKCC2, SLC12A2/NKCC1, SLC12A3/NCC, SLC12A4/KCC1, SLC12A5/KCC2 or SLC12A6/KCC3, regulating their activity. Phosphorylation of Na-K-Cl cotransporters SLC12A2/NKCC1 and SLC12A2/NKCC1 promote their activation and ion influx; simultaneously, phosphorylation of K-Cl cotransporters SLC12A4/KCC1, SLC12A5/KCC2 and SLC12A6/KCC3 inhibits its activity, blocking ion efflux. Phosphorylates WNK4, possibly regulating the activity of SLC12A3/NCC. May also phosphorylate NEDD4L. Also acts as a scaffold protein independently of its protein kinase activity: negatively regulates cell membrane localization of various transporters and channels, such as KCNJ1 and SLC26A9. Increases Ca(2+) influx mediated by TRPV5 and TRPV6 by enhancing their membrane expression level via a kinase-dependent pathway. This Mus musculus (Mouse) protein is Serine/threonine-protein kinase WNK3.